We begin with the raw amino-acid sequence, 864 residues long: MTIPELPLGGIVSQAVELGAPYEPPLTPDHPEWKVHVPAAAVDKKDQDTPDNWVRRDPRILRLTGRHPLNCEPPMDVLMEYGFITPPAVHFVRNHGAAPRIPWAEHRIEINGLVDKPLFLTMDELVALPSITFPCTLVCAGNRRKEENMLKKSIGFNWGPCATSTTYWTGVRLRDLLLLAGIKSPEQGANFVCFRGPKGELPRGSDGSYGTSLTYAKAMDPSSDVIIAYKQNHRWLTPDHGFPVRMIIPGFIGGRMVKWLSEITVTEVESQNFYHFMDNRVLPSHVDEALAKEEGWWYKPEFIINDLNINSAVARPWHDEVVRLDANKPYTMRGYAYAGGGRKIIRCEVSLDDGKTWRLGDIQRFEKPNEYGKYWCWVHWSLDVMTFDFLNAKEVLLRAWDETMNTQPAIITWNVMGMMNNCYYRIKIHPQVDSDGVMGLRFQHPAPVELGERGNMGWREEDNLVAQALAAVKEGATAAAAPAAPPPVVAAAANGGPRQYTMEEVAAHNTEESCWFVHGGKVYDATPYLDEHPGGAESILIVAGADATDEFNSIHSSKAKAMLAQYYIGDLVASKPAAAGATVPEPQPVASTSSPAVDPLVVLNPRQKVKLPLIERIELNRNTRIFRFGLPSPQHRIGLPVGKHVFTYATINGENVMRAYTPISGDEELGRLDMLIKVYFANEHPAFPDGGKMSQHFESLRIGDTVEFKGPLGHFVYDGRGSYTLNGKLHKHATHMSFVAGGTGITPCYAVIKAALRDPEDKTQISLVFANNTEEDILLREELDELANNHPDRFHLWHTVSQTNSSDWKFSTGRVTLEMFKQHLFACSGPECLALMCGPPAMLEHCCVPFLESMGYSKEQMIHF.

Cys-139 serves as a coordination point for Mo-molybdopterin. Residues 497 to 572 (PRQYTMEEVA…LAQYYIGDLV (76 aa)) enclose the Cytochrome b5 heme-binding domain. His-532 and His-555 together coordinate heme. The region spanning 606–718 (RQKVKLPLIE…KGPLGHFVYD (113 aa)) is the FAD-binding FR-type domain. FAD is bound by residues 658–661 (RAYT), 675–679 (LIKVY), Phe-680, Phe-687, 692–694 (KMS), and Thr-746.

It belongs to the nitrate reductase family. As to quaternary structure, homodimer. It depends on FAD as a cofactor. Heme is required as a cofactor. The cofactor is Mo-molybdopterin.

It catalyses the reaction nitrite + NAD(+) + H2O = nitrate + NADH + H(+). Its function is as follows. Nitrate reductase is a key enzyme involved in the first step of nitrate assimilation in plants, fungi and bacteria. In Volvox carteri (Green alga), this protein is Nitrate reductase [NADH] (NITA).